A 150-amino-acid chain; its full sequence is Catabolic 3-dehydroquinase 2 (150 aa).

The Proton acceptor role is filled by Tyr-23. Substrate-binding residues include Asn-74, His-80, and Asp-87. Residue His-100 is the Proton donor of the active site. Substrate is bound by residues 101–102 (IT) and Arg-111.

This sequence belongs to the type-II 3-dehydroquinase family. In terms of assembly, homododecamer. Adopts a ring-like structure, composed of an arrangement of two hexameric rings stacked on top of one another.

The catalysed reaction is 3-dehydroquinate = 3-dehydroshikimate + H2O. It functions in the pathway aromatic compound metabolism; 3,4-dihydroxybenzoate biosynthesis; 3,4-dihydroxybenzoate from 3-dehydroquinate: step 1/2. Functionally, is involved in the catabolism of quinate. Allows the utilization of quinate as carbon source via the beta-ketoadipate pathway. The polypeptide is Catabolic 3-dehydroquinase 2 (Aspergillus fumigatus (strain ATCC MYA-4609 / CBS 101355 / FGSC A1100 / Af293) (Neosartorya fumigata)).